A 286-amino-acid chain; its full sequence is Pheromone receptor transcription factor (286 aa).

The residue at position 2 (Ser2) is an N-acetylserine. The residue at position 2 (Ser2) is a Phosphoserine. Residues 18–72 form the MADS-box domain; sequence RRKIEIKFIENKTRRHVTFSKRKHGIMKKAFELSVLTGTQVLLLVVSETGLVYTF. A compositionally biased stretch (acidic residues) spans 97–119; the sequence is PDDEEEDEEEDGDDDDDDDDDGN. Positions 97–137 are disordered; the sequence is PDDEEEDEEEDGDDDDDDDDDGNDMQRQQPQQQQPQQQQQV. The span at 122–136 shows a compositional bias: low complexity; it reads QRQQPQQQQPQQQQQ. The residue at position 144 (Ser144) is a Phosphoserine. A disordered region spans residues 167–264; the sequence is LGGANPNQNS…QQAFANAASP (98 aa). The segment covering 171–246 has biased composition (low complexity); the sequence is NPNQNSMIQQ…QQQQQQQQQP (76 aa).

Homodimer. Binds DNA with a high specificity in complex with mating-type protein ALPHA1. Also binds DNA with a high specificity as a heterotetramer consisting of an ALPHA2 dimer and an MCM1 dimer. Interacts with YHP1 and YOX1, possibly leading to its inactivation. Interacts with ARG80 and ARG82.

It localises to the nucleus. Its function is as follows. Transcription factor required for the efficient replication of minichromosomes and the transcriptional regulation of early cell cycle genes. Activates transcription of ECB-dependent genes during the G1/M phase. Genes that contain a ECB (early cell box) element in their transcription regulatory region are transcribed only during G1/M phases. Interacts with the alpha-2 repressor or with the alpha-1 activator thereby regulating the expression of mating-type-specific genes. With ARG80, ARG81 and ARG82, coordinates the expression of arginine anabolic and catabolic genes in response to arginine. This is Pheromone receptor transcription factor (MCM1) from Saccharomyces cerevisiae (strain ATCC 204508 / S288c) (Baker's yeast).